A 63-amino-acid chain; its full sequence is Beta-defensin 3 (63 aa).

The signal sequence occupies residues 1-20 (MRIHYLLFAFLLVLLSPPAA). Positions 21–22 (FS) are excised as a propeptide. 3 disulfide bridges follow: Cys-31/Cys-59, Cys-38/Cys-52, and Cys-42/Cys-60.

The protein belongs to the beta-defensin family. LAP/TAP subfamily. Highest expression in salivary glands, epididymis, ovary and pancreas and to a lesser extent in lung, liver and brain. Low or no expression in skeletal muscle and tongue.

It localises to the secreted. In terms of biological role, antimicrobial activity against Gram-negative bacteria E.coli and P.aeruginosa. This chain is Beta-defensin 3 (Defb3), found in Mus musculus (Mouse).